Reading from the N-terminus, the 258-residue chain is Acetylglutamate kinase (258 aa).

Residues 40-41 (GG), Arg62, and Asn158 contribute to the substrate site.

It belongs to the acetylglutamate kinase family. ArgB subfamily.

Its subcellular location is the cytoplasm. It carries out the reaction N-acetyl-L-glutamate + ATP = N-acetyl-L-glutamyl 5-phosphate + ADP. Its pathway is amino-acid biosynthesis; L-arginine biosynthesis; N(2)-acetyl-L-ornithine from L-glutamate: step 2/4. Functionally, catalyzes the ATP-dependent phosphorylation of N-acetyl-L-glutamate. This chain is Acetylglutamate kinase, found in Azobacteroides pseudotrichonymphae genomovar. CFP2.